Here is a 305-residue protein sequence, read N- to C-terminus: HTH-type transcriptional activator BauR (305 aa).

In terms of domain architecture, HTH lysR-type spans F15–T72.

It belongs to the LysR transcriptional regulatory family.

Involved in the degradation of beta-alanine. BauR activates the transcription of the bauABCD operon. This Pseudomonas aeruginosa (strain ATCC 15692 / DSM 22644 / CIP 104116 / JCM 14847 / LMG 12228 / 1C / PRS 101 / PAO1) protein is HTH-type transcriptional activator BauR (bauR).